The following is a 555-amino-acid chain: Urocanate hydratase (555 aa).

NAD(+) is bound by residues 51-52 (GG), Gln-129, 175-177 (GMG), Glu-195, 262-266 (QTSAH), 272-273 (YL), and Tyr-321. Cys-409 is a catalytic residue. An NAD(+)-binding site is contributed by Gly-491.

Belongs to the urocanase family. The cofactor is NAD(+).

It localises to the cytoplasm. The catalysed reaction is 4-imidazolone-5-propanoate = trans-urocanate + H2O. The protein operates within amino-acid degradation; L-histidine degradation into L-glutamate; N-formimidoyl-L-glutamate from L-histidine: step 2/3. Its function is as follows. Catalyzes the conversion of urocanate to 4-imidazolone-5-propionate. In Xanthomonas campestris pv. campestris (strain ATCC 33913 / DSM 3586 / NCPPB 528 / LMG 568 / P 25), this protein is Urocanate hydratase.